A 264-amino-acid chain; its full sequence is MQNELNPILLSQNSIRFATRVAIFFIIRDELVEAVTWRHPVKSMCLGLTITLLYLHPVSFSAILLLVFLTMMPISMTHDVTTNLKDLQNFMASYSSSYDQLLYFRQNYYHHITPSAISSGLLVSLVLIFLLAYLRISIDRYLPIAIWIGLISLHPKLRSYLIQFYSAKRDHVPYLQIRNELAQVWRHVDISGSQTTTRYTSFPKFNPENSVTSLDLVEPPENYSWAPQSDWTFVPPNEFRRFILWSPQPPKMNRKSSHGSNLPL.

The next 3 membrane-spanning stretches (helical) occupy residues Leu-48–Phe-68, Ile-112–Ala-132, and Leu-142–Ile-162. A Phosphoserine modification is found at Ser-260.

The protein localises to the membrane. This is an uncharacterized protein from Schizosaccharomyces pombe (strain 972 / ATCC 24843) (Fission yeast).